A 108-amino-acid chain; its full sequence is Nucleoid-associated protein PSPTO_3645 (108 aa).

The segment covering 85–96 (QASQDKTASMTA) has biased composition (polar residues). Residues 85–108 (QASQDKTASMTAGMQLPPGMKLPF) form a disordered region.

It belongs to the YbaB/EbfC family. In terms of assembly, homodimer.

Its subcellular location is the cytoplasm. It localises to the nucleoid. Its function is as follows. Binds to DNA and alters its conformation. May be involved in regulation of gene expression, nucleoid organization and DNA protection. In Pseudomonas syringae pv. tomato (strain ATCC BAA-871 / DC3000), this protein is Nucleoid-associated protein PSPTO_3645.